The primary structure comprises 190 residues: dTTP/UTP pyrophosphatase (190 aa).

Catalysis depends on Asp71, which acts as the Proton acceptor.

This sequence belongs to the Maf family. YhdE subfamily. A divalent metal cation serves as cofactor.

Its subcellular location is the cytoplasm. It catalyses the reaction dTTP + H2O = dTMP + diphosphate + H(+). The enzyme catalyses UTP + H2O = UMP + diphosphate + H(+). In terms of biological role, nucleoside triphosphate pyrophosphatase that hydrolyzes dTTP and UTP. May have a dual role in cell division arrest and in preventing the incorporation of modified nucleotides into cellular nucleic acids. The sequence is that of dTTP/UTP pyrophosphatase from Xanthomonas euvesicatoria pv. vesicatoria (strain 85-10) (Xanthomonas campestris pv. vesicatoria).